The sequence spans 224 residues: Transmembrane protein C16orf54 (224 aa).

Threonine 4 carries O-linked (GalNAc...) threonine glycosylation. A helical membrane pass occupies residues 32–52 (IPIMLVLATLAALFILTTAVL). Disordered stretches follow at residues 104–138 (TDRAPEPPTQVGTLEARATAPPAPSAPNSAPSNLG) and 152–203 (WGPQ…GLQP). Phosphothreonine occurs at positions 112 and 116. The residue at position 194 (serine 194) is a Phosphoserine.

In terms of processing, O-glycosylated with core 1 or possibly core 8 glycans.

It is found in the membrane. In Homo sapiens (Human), this protein is Transmembrane protein C16orf54 (C16orf54).